The primary structure comprises 81 residues: Cytochrome b559 subunit alpha (81 aa).

Residues 21–35 (VIHSITIPMLFIAGW) traverse the membrane as a helical segment. Histidine 23 lines the heme pocket.

It belongs to the PsbE/PsbF family. In terms of assembly, heterodimer of an alpha subunit and a beta subunit. PSII is composed of 1 copy each of membrane proteins PsbA, PsbB, PsbC, PsbD, PsbE, PsbF, PsbH, PsbI, PsbJ, PsbK, PsbL, PsbM, PsbT, PsbX, PsbY, PsbZ, Psb30/Ycf12, peripheral proteins PsbO, CyanoQ (PsbQ), PsbU, PsbV and a large number of cofactors. It forms dimeric complexes. Heme b is required as a cofactor.

It localises to the cellular thylakoid membrane. In terms of biological role, this b-type cytochrome is tightly associated with the reaction center of photosystem II (PSII). PSII is a light-driven water:plastoquinone oxidoreductase that uses light energy to abstract electrons from H(2)O, generating O(2) and a proton gradient subsequently used for ATP formation. It consists of a core antenna complex that captures photons, and an electron transfer chain that converts photonic excitation into a charge separation. In Crocosphaera subtropica (strain ATCC 51142 / BH68) (Cyanothece sp. (strain ATCC 51142)), this protein is Cytochrome b559 subunit alpha.